The following is a 463-amino-acid chain: DNA-binding protein K10 (463 aa).

The span at 1–13 shows a compositional bias: polar residues; the sequence is MVSKNQFYQNWTM. Positions 1–304 are disordered; the sequence is MVSKNQFYQN…RNGPGPGPMM (304 aa). Positions 14–50 are enriched in low complexity; it reads QSQQQHPHQMQQQFQQQQQPNLQHRNNQSNNNNCNNN. Residues 85-94 are compositionally biased toward polar residues; that stretch reads QMMFSSSQMP. Repeat copies occupy residues 87–94, 95–102, 103–110, 111–118, 119–126, 127–134, and 135–142. The 7 X approximate tandem repeats stretch occupies residues 87 to 142; the sequence is MFSSSQMPSDPLYIDFSSPPPGFKHNQVGSPKKKSMKGIKQQQHPSPNQQQPPSPN. A compositionally biased stretch (low complexity) spans 142 to 193; the sequence is NQQQHPSPNQQQHPSPNQQQHPNSNQQQHLSPNQQQGKMNNQNNNHMNQSQQ. The span at 194–214 shows a compositional bias: polar residues; that stretch reads PFNNQMNGSDWQRHPGNNPNQ. 2 stretches are compositionally biased toward pro residues: residues 225–270 and 282–291; these read GPPP…PPVP and GGPPPPPPPL. Residues 397–416 constitute a DNA-binding region (H-T-H motif); sequence DELFAQYKGQRDKFVSLYEA. The disordered stretch occupies residues 426–463; the sequence is AATVKAKDAKSDKDKNAISSQSAAPKAGSAKDATIPNP. Basic and acidic residues predominate over residues 430-441; sequence KAKDAKSDKDKN.

In terms of assembly, interacts (via N-terminus) with sqd; the interaction is direct and may be involved in localization of sqd to the oocyte during oogenesis.

Its subcellular location is the nucleus. Its function is as follows. May be involved in localization of sqd to the oocyte during oogenesis. The polypeptide is DNA-binding protein K10 (fs(1)K10) (Drosophila melanogaster (Fruit fly)).